The sequence spans 478 residues: Argininosuccinate lyase (478 aa).

Belongs to the lyase 1 family. Argininosuccinate lyase subfamily.

The protein resides in the cytoplasm. The enzyme catalyses 2-(N(omega)-L-arginino)succinate = fumarate + L-arginine. The protein operates within amino-acid biosynthesis; L-arginine biosynthesis; L-arginine from L-ornithine and carbamoyl phosphate: step 3/3. This is Argininosuccinate lyase from Rhodospirillum rubrum (strain ATCC 11170 / ATH 1.1.1 / DSM 467 / LMG 4362 / NCIMB 8255 / S1).